A 343-amino-acid chain; its full sequence is S-adenosylmethionine:tRNA ribosyltransferase-isomerase (343 aa).

This sequence belongs to the QueA family. As to quaternary structure, monomer.

It localises to the cytoplasm. The enzyme catalyses 7-aminomethyl-7-carbaguanosine(34) in tRNA + S-adenosyl-L-methionine = epoxyqueuosine(34) in tRNA + adenine + L-methionine + 2 H(+). The protein operates within tRNA modification; tRNA-queuosine biosynthesis. Its function is as follows. Transfers and isomerizes the ribose moiety from AdoMet to the 7-aminomethyl group of 7-deazaguanine (preQ1-tRNA) to give epoxyqueuosine (oQ-tRNA). The protein is S-adenosylmethionine:tRNA ribosyltransferase-isomerase of Stenotrophomonas maltophilia (strain R551-3).